The chain runs to 134 residues: Interferon-induced transmembrane protein 5 (134 aa).

Residues 1 to 20 (MDTSYPREDPRAPSSRKADA) show a composition bias toward basic and acidic residues. Residues 1-31 (MDTSYPREDPRAPSSRKADAAAHTALSMGTP) form a disordered region. Residues 1 to 39 (MDTSYPREDPRAPSSRKADAAAHTALSMGTPGPTPRDHM) are Extracellular-facing. The helical transmembrane segment at 40–60 (LWSVFSTMYLNLCCLGFLALV) threads the bilayer. 3 S-palmitoyl cysteine lipidation sites follow: cysteine 52, cysteine 53, and cysteine 86. Topologically, residues 61-88 (HSVKARDQKMAGNLEAARQYGSKAKCYN) are cytoplasmic. A helical membrane pass occupies residues 89–109 (ILAAMWTLVPPLLLLGLVVTG). Over 110 to 134 (ALHLSKLAKDSAAFFSTKFDEEDYN) the chain is Extracellular.

The protein belongs to the CD225/Dispanin family. Interacts with FKBP11. Post-translationally, palmitoylated. In terms of tissue distribution, detected in embryonic bone (at protein level). Highly expressed in osteoblasts of adults and embryos. Expressed in primitive hemopoietic cells.

It localises to the cell membrane. In terms of biological role, required for normal bone mineralization. This is Interferon-induced transmembrane protein 5 (Ifitm5) from Mus musculus (Mouse).